We begin with the raw amino-acid sequence, 213 residues long: Putative 3-methyladenine DNA glycosylase (213 aa).

Belongs to the DNA glycosylase MPG family.

This is Putative 3-methyladenine DNA glycosylase from Corynebacterium jeikeium (strain K411).